Here is a 199-residue protein sequence, read N- to C-terminus: ATP-dependent Clp protease proteolytic subunit 2 (199 aa).

The Nucleophile role is filled by Ser-95. His-120 is an active-site residue.

This sequence belongs to the peptidase S14 family. In terms of assembly, fourteen ClpP subunits assemble into 2 heptameric rings which stack back to back to give a disk-like structure with a central cavity, resembling the structure of eukaryotic proteasomes.

The protein localises to the cytoplasm. The catalysed reaction is Hydrolysis of proteins to small peptides in the presence of ATP and magnesium. alpha-casein is the usual test substrate. In the absence of ATP, only oligopeptides shorter than five residues are hydrolyzed (such as succinyl-Leu-Tyr-|-NHMec, and Leu-Tyr-Leu-|-Tyr-Trp, in which cleavage of the -Tyr-|-Leu- and -Tyr-|-Trp bonds also occurs).. Cleaves peptides in various proteins in a process that requires ATP hydrolysis. Has a chymotrypsin-like activity. Plays a major role in the degradation of misfolded proteins. This is ATP-dependent Clp protease proteolytic subunit 2 from Mycolicibacterium paratuberculosis (strain ATCC BAA-968 / K-10) (Mycobacterium paratuberculosis).